A 248-amino-acid chain; its full sequence is 2,3-bisphosphoglycerate-dependent phosphoglycerate mutase (248 aa).

Substrate contacts are provided by residues 8-15 (RHGESLWN), 21-22 (TG), Arg60, 87-90 (EKHY), Lys98, 114-115 (RR), and 183-184 (GN). The active-site Tele-phosphohistidine intermediate is His9. Glu87 acts as the Proton donor/acceptor in catalysis.

This sequence belongs to the phosphoglycerate mutase family. BPG-dependent PGAM subfamily.

The enzyme catalyses (2R)-2-phosphoglycerate = (2R)-3-phosphoglycerate. It participates in carbohydrate degradation; glycolysis; pyruvate from D-glyceraldehyde 3-phosphate: step 3/5. In terms of biological role, catalyzes the interconversion of 2-phosphoglycerate and 3-phosphoglycerate. The sequence is that of 2,3-bisphosphoglycerate-dependent phosphoglycerate mutase from Porphyromonas gingivalis (strain ATCC 33277 / DSM 20709 / CIP 103683 / JCM 12257 / NCTC 11834 / 2561).